Here is a 798-residue protein sequence, read N- to C-terminus: Phenylalanine--tRNA ligase beta subunit (798 aa).

Residues asparagine 39–asparagine 148 form the tRNA-binding domain. The region spanning serine 402 to leucine 477 is the B5 domain. Mg(2+) is bound by residues aspartate 455, aspartate 461, and aspartate 465. Residues serine 704 to arginine 797 form the FDX-ACB domain.

The protein belongs to the phenylalanyl-tRNA synthetase beta subunit family. Type 1 subfamily. In terms of assembly, tetramer of two alpha and two beta subunits. Mg(2+) is required as a cofactor.

The protein resides in the cytoplasm. The catalysed reaction is tRNA(Phe) + L-phenylalanine + ATP = L-phenylalanyl-tRNA(Phe) + AMP + diphosphate + H(+). The polypeptide is Phenylalanine--tRNA ligase beta subunit (pheT) (Buchnera aphidicola subsp. Schizaphis graminum (strain Sg)).